Consider the following 218-residue polypeptide: Guanylate kinase (218 aa).

Positions 17–196 (GVLLALSSPS…ALEKLNEILH (180 aa)) constitute a Guanylate kinase-like domain. ATP is bound at residue 24 to 31 (SPSGAGKT).

Belongs to the guanylate kinase family.

The protein localises to the cytoplasm. It carries out the reaction GMP + ATP = GDP + ADP. Functionally, essential for recycling GMP and indirectly, cGMP. The polypeptide is Guanylate kinase (Maricaulis maris (strain MCS10) (Caulobacter maris)).